Reading from the N-terminus, the 246-residue chain is Phosphatidylserine decarboxylase proenzyme (246 aa).

Residue Ser-204 is the Schiff-base intermediate with substrate; via pyruvic acid of the active site. Pyruvic acid (Ser); by autocatalysis is present on Ser-204.

The protein belongs to the phosphatidylserine decarboxylase family. PSD-A subfamily. Heterodimer of a large membrane-associated beta subunit and a small pyruvoyl-containing alpha subunit. Pyruvate serves as cofactor. Post-translationally, is synthesized initially as an inactive proenzyme. Formation of the active enzyme involves a self-maturation process in which the active site pyruvoyl group is generated from an internal serine residue via an autocatalytic post-translational modification. Two non-identical subunits are generated from the proenzyme in this reaction, and the pyruvate is formed at the N-terminus of the alpha chain, which is derived from the carboxyl end of the proenzyme. The post-translation cleavage follows an unusual pathway, termed non-hydrolytic serinolysis, in which the side chain hydroxyl group of the serine supplies its oxygen atom to form the C-terminus of the beta chain, while the remainder of the serine residue undergoes an oxidative deamination to produce ammonia and the pyruvoyl prosthetic group on the alpha chain.

It is found in the cell membrane. It carries out the reaction a 1,2-diacyl-sn-glycero-3-phospho-L-serine + H(+) = a 1,2-diacyl-sn-glycero-3-phosphoethanolamine + CO2. It functions in the pathway phospholipid metabolism; phosphatidylethanolamine biosynthesis; phosphatidylethanolamine from CDP-diacylglycerol: step 2/2. Functionally, catalyzes the formation of phosphatidylethanolamine (PtdEtn) from phosphatidylserine (PtdSer). This Zymomonas mobilis subsp. mobilis (strain ATCC 31821 / ZM4 / CP4) protein is Phosphatidylserine decarboxylase proenzyme.